Here is a 132-residue protein sequence, read N- to C-terminus: Small ribosomal subunit protein uS8 (132 aa).

This sequence belongs to the universal ribosomal protein uS8 family. As to quaternary structure, part of the 30S ribosomal subunit. Contacts proteins S5 and S12.

In terms of biological role, one of the primary rRNA binding proteins, it binds directly to 16S rRNA central domain where it helps coordinate assembly of the platform of the 30S subunit. This chain is Small ribosomal subunit protein uS8, found in Rickettsia massiliae (strain Mtu5).